We begin with the raw amino-acid sequence, 630 residues long: MLSSRLGLFNMFRLLAAILVFTGLASAVNADLLQTGGSRWVVLASTRDLDNAIGIANLYQHRFDDVRVAEASNGWLAVIAGPVSIARGAKAAREELWSAGGFPPDLFLSNGQSLRRTVWEPPKGRPIPTWSYKGGQPLVFSAGGLEIEVSHLAEGNTRYPSITLRRAGRLLIKEVLKGSESFGDNMNAEVRLVWLDRAVAEPQIIFSSHWNGAHCCTVSKILTKVGNGWTSIEGATLDGGGYRLQDIDGDGSVELLSVDNSFLYTFAPYVFSSAPLVISKLDGDRLIDMRWNSAFRRYYRRELFGWEYRAKLEPEIWRKNGFLSAWLALKSVLGESDQAWTVVLENYDRSSEWPLTVCDAPLKEGVCPEEATREVSFPEALRDHLARNGYLGPQVAKIEETSKPTEQPSPADSTSTPAAPEKGAASSAGTGFFISKQGHLVTNHHVIKGCSAIEVRRPGQLRLPANIVAVDPTNDLALLRVESDTGAYASVRVETRLGESVAVFGYPLSHVLASGGNFTLGNVTALAGLGNDTRFIQISAPVQPGNSGGPLIDSYGNVIGVVTSKLDALAALAVTGDIPQNVNFALRGASLYAFLLSYGISPVAGSNTQKLDAPELAERASSFSVAVTCE.

2 consecutive transmembrane segments (helical) span residues 8–28 (LFNMFRLLAAILVFTGLASAV) and 258–278 (VDNSFLYTFAPYVFSSAPLVI). The interval 399-426 (EETSKPTEQPSPADSTSTPAAPEKGAAS) is disordered. Residues 404-417 (PTEQPSPADSTSTP) are compositionally biased toward polar residues.

Belongs to the peptidase S1C family.

Its subcellular location is the cell membrane. This is an uncharacterized protein from Sinorhizobium fredii (strain NBRC 101917 / NGR234).